The chain runs to 173 residues: MAAAFASRLTRGGRSLLGGLNNGGSMNSSNGMMNESILSQQQQRRTFIQMGTVLKVVDNSGAKKVMCIQALKGKKGARLGDTIVASVKEAMPNGKVKKGAVVYGVVVRAAMQRGRVDGSEVRFDDNAVVLVDSKDKNTKTDRQPIGTRVFGPVPHELRKKKHLKILALAQHVA.

A mitochondrion-targeting transit peptide spans 1 to 61; the sequence is MAAAFASRLT…TVLKVVDNSG (61 aa).

The protein belongs to the universal ribosomal protein uL14 family. In terms of assembly, part of the mitochondrial 50S ribosomal subunit. Mostly expressed in leaves and inflorescences, including floral organs and meristems, and, to a lower extent, in pistils.

It is found in the mitochondrion. In terms of biological role, binds to 23S rRNA in mitochondrion. The polypeptide is Large ribosomal subunit protein uL14mz (HLP) (Arabidopsis thaliana (Mouse-ear cress)).